Reading from the N-terminus, the 910-residue chain is DNA mismatch repair protein MutS (910 aa).

Residue 607 to 614 (GPNMAGKS) participates in ATP binding.

Belongs to the DNA mismatch repair MutS family.

Functionally, this protein is involved in the repair of mismatches in DNA. It is possible that it carries out the mismatch recognition step. This protein has a weak ATPase activity. This Geobacillus thermodenitrificans (strain NG80-2) protein is DNA mismatch repair protein MutS.